We begin with the raw amino-acid sequence, 200 residues long: Shikimate kinase (200 aa).

33–38 (GAGKST) serves as a coordination point for ATP. Position 37 (Ser37) interacts with Mg(2+). The substrate site is built by Asp55, Arg79, and Gly101. Arg139 is an ATP binding site. Residue Arg158 participates in substrate binding.

This sequence belongs to the shikimate kinase family. Monomer. It depends on Mg(2+) as a cofactor.

Its subcellular location is the cytoplasm. The catalysed reaction is shikimate + ATP = 3-phosphoshikimate + ADP + H(+). The protein operates within metabolic intermediate biosynthesis; chorismate biosynthesis; chorismate from D-erythrose 4-phosphate and phosphoenolpyruvate: step 5/7. Catalyzes the specific phosphorylation of the 3-hydroxyl group of shikimic acid using ATP as a cosubstrate. The polypeptide is Shikimate kinase (Brucella abortus (strain S19)).